We begin with the raw amino-acid sequence, 118 residues long: UPF0342 protein LCK_01004 (118 aa).

Belongs to the UPF0342 family.

This chain is UPF0342 protein LCK_01004, found in Leuconostoc citreum (strain KM20).